An 84-amino-acid polypeptide reads, in one-letter code: ATP synthase subunit c (84 aa).

2 helical membrane-spanning segments follow: residues 9-29 (IIGASILLAFAALGTAIGFAI) and 54-74 (IVAGLLDAIAMIAVGISLLFI).

This sequence belongs to the ATPase C chain family. As to quaternary structure, F-type ATPases have 2 components, F(1) - the catalytic core - and F(0) - the membrane proton channel. F(1) has five subunits: alpha(3), beta(3), gamma(1), delta(1), epsilon(1). F(0) has three main subunits: a(1), b(2) and c(10-14). The alpha and beta chains form an alternating ring which encloses part of the gamma chain. F(1) is attached to F(0) by a central stalk formed by the gamma and epsilon chains, while a peripheral stalk is formed by the delta and b chains.

It localises to the cell inner membrane. F(1)F(0) ATP synthase produces ATP from ADP in the presence of a proton or sodium gradient. F-type ATPases consist of two structural domains, F(1) containing the extramembraneous catalytic core and F(0) containing the membrane proton channel, linked together by a central stalk and a peripheral stalk. During catalysis, ATP synthesis in the catalytic domain of F(1) is coupled via a rotary mechanism of the central stalk subunits to proton translocation. Its function is as follows. Key component of the F(0) channel; it plays a direct role in translocation across the membrane. A homomeric c-ring of between 10-14 subunits forms the central stalk rotor element with the F(1) delta and epsilon subunits. This is ATP synthase subunit c from Glaesserella parasuis serovar 5 (strain SH0165) (Haemophilus parasuis).